The sequence spans 381 residues: Probable cyclic AMP-AMP-GMP nucleotide synthase (381 aa).

GTP-binding residues include Ser-53 and Arg-56. Active-site residues include Asp-69 and Asp-71. The Mg(2+) site is built by Asp-69 and Asp-71. Arg-109 contributes to the GTP binding site. Asp-121 is a catalytic residue. Residues Asp-121 and Asp-196 each coordinate Mg(2+). GTP-binding residues include Arg-197, Arg-204, Thr-205, Gln-210, and Arg-307. The disordered stretch occupies residues 348–381 (GTKFPFPGPQGGDRSGGFTAPTQPAEPQKTGRFA).

This sequence belongs to the CD-NTase family. D02 subfamily. Mg(2+) serves as cofactor.

It catalyses the reaction GTP + 2 ATP = 3',3',3'-cAAG + 3 diphosphate. Functionally, cyclic nucleotide synthase (second messenger synthase) of a CBASS antivirus system. CBASS (cyclic oligonucleotide-based antiphage signaling system) provides immunity against bacteriophage. The CD-NTase protein synthesizes cyclic nucleotides in response to infection; these serve as specific second messenger signals. The signals activate a diverse range of effectors, leading to bacterial cell death and thus abortive phage infection. Its function is as follows. Cyclic nucleotide synthase, synthesizes a tricyclic nucleotide with AMP and GMP moieties, probably 3',3',3'-cyclic AMP-AMP-GMP (3'3'3'-cAAG). Controls the activity of the associated CBASS effector protein. The polypeptide is Probable cyclic AMP-AMP-GMP nucleotide synthase (Salmonella paratyphi B (Salmonella enterica subsp. enterica serovar Paratyphi B)).